The following is a 336-amino-acid chain: MKFYNREKELNYLKTYCQLDPNSILFVYGPKSSGKSTVMRRVIKELEDSNIVFFYYNLRKYATYSKEEFLRVFFEKSEKKYLLNKLELNLGVFKFGVEENFDFNNLKLNDVFAKINESINAVVEDGKKPVLIIDELQKLKNIYFNGGKSLLNELFNLFVSLTKMEHLCHVICLTSDTLFIEEIYQSSTLENTSKYYLIDWLRKGTIRNILKEEGFSEEEINYCLDYLSLPYEIVDLIENKKLGLSVEETIRQWINIEKDKIKYLIDTTDLDEEELYKVLSKFKDKIKISYEKEVKKEEMKYFKFLIKNEILFYDVINGIIKPTSVKKWYAIREILK.

29-36 is a binding site for ATP; the sequence is GPKSSGKS.

Belongs to the archaeal ATPase family.

This is an uncharacterized protein from Methanocaldococcus jannaschii (strain ATCC 43067 / DSM 2661 / JAL-1 / JCM 10045 / NBRC 100440) (Methanococcus jannaschii).